We begin with the raw amino-acid sequence, 737 residues long: Polyribonucleotide nucleotidyltransferase (737 aa).

Asp489 and Asp495 together coordinate Mg(2+). The region spanning 556 to 615 (PKIDTIKIDVDKIKIVIGKGGETIDKIIAETGVKIDIDEEGNVSIYSSDQDAINRAKEII) is the KH domain. The region spanning 625-693 (DEVYRAKVVR…EKGRIDASMK (69 aa)) is the S1 motif domain. The disordered stretch occupies residues 691–737 (SMKALLPRPPKPEHDEKGEKSERPHRPRHHKDHKPKKEFTETPKDSE). The span at 700-714 (PKPEHDEKGEKSERP) shows a compositional bias: basic and acidic residues. The segment covering 715 to 724 (HRPRHHKDHK) has biased composition (basic residues). Basic and acidic residues predominate over residues 725 to 737 (PKKEFTETPKDSE).

This sequence belongs to the polyribonucleotide nucleotidyltransferase family. Mg(2+) is required as a cofactor.

It localises to the cytoplasm. It carries out the reaction RNA(n+1) + phosphate = RNA(n) + a ribonucleoside 5'-diphosphate. Functionally, involved in mRNA degradation. Catalyzes the phosphorolysis of single-stranded polyribonucleotides processively in the 3'- to 5'-direction. The chain is Polyribonucleotide nucleotidyltransferase from Streptococcus pneumoniae serotype 19F (strain G54).